The chain runs to 66 residues: Large ribosomal subunit protein bL31 (66 aa).

Residues cysteine 16, cysteine 18, cysteine 36, and cysteine 39 each contribute to the Zn(2+) site.

It belongs to the bacterial ribosomal protein bL31 family. Type A subfamily. In terms of assembly, part of the 50S ribosomal subunit. Zn(2+) serves as cofactor.

Binds the 23S rRNA. The sequence is that of Large ribosomal subunit protein bL31 from Campylobacter curvus (strain 525.92).